The chain runs to 345 residues: L-threonine 3-dehydrogenase (345 aa).

C42 provides a ligand contact to Zn(2+). Catalysis depends on charge relay system residues T44 and H47. Zn(2+)-binding residues include H67, E68, C97, C100, C103, and C111. NAD(+)-binding positions include I179, D199, R204, 266-268 (LGI), and 290-291 (IY).

This sequence belongs to the zinc-containing alcohol dehydrogenase family. In terms of assembly, homotetramer. Requires Zn(2+) as cofactor.

The protein localises to the cytoplasm. It catalyses the reaction L-threonine + NAD(+) = (2S)-2-amino-3-oxobutanoate + NADH + H(+). It participates in amino-acid degradation; L-threonine degradation via oxydo-reductase pathway; glycine from L-threonine: step 1/2. Functionally, catalyzes the NAD(+)-dependent oxidation of L-threonine to 2-amino-3-ketobutyrate. The chain is L-threonine 3-dehydrogenase from Rhizobium johnstonii (strain DSM 114642 / LMG 32736 / 3841) (Rhizobium leguminosarum bv. viciae).